The chain runs to 548 residues: CTP synthase (548 aa).

The segment at 1 to 267 (MKTKFIFITG…DQKIAIMLQL (267 aa)) is amidoligase domain. Residue Ser14 participates in CTP binding. Ser14 is a UTP binding site. ATP-binding positions include 15–20 (SLGKGL) and Asp72. Residues Asp72 and Glu141 each contribute to the Mg(2+) site. CTP contacts are provided by residues 148 to 150 (DIE), 188 to 193 (KTKPTQ), and Lys224. UTP is bound by residues 188–193 (KTKPTQ) and Lys224. A Glutamine amidotransferase type-1 domain is found at 292-545 (TIGIVGKYVD…IKAAGKQAVK (254 aa)). Gly354 lines the L-glutamine pocket. Cys381 serves as the catalytic Nucleophile; for glutamine hydrolysis. L-glutamine is bound by residues 382 to 385 (LGMQ), Glu405, and Arg473. Active-site residues include His518 and Glu520.

The protein belongs to the CTP synthase family. As to quaternary structure, homotetramer.

The enzyme catalyses UTP + L-glutamine + ATP + H2O = CTP + L-glutamate + ADP + phosphate + 2 H(+). It carries out the reaction L-glutamine + H2O = L-glutamate + NH4(+). The catalysed reaction is UTP + NH4(+) + ATP = CTP + ADP + phosphate + 2 H(+). The protein operates within pyrimidine metabolism; CTP biosynthesis via de novo pathway; CTP from UDP: step 2/2. With respect to regulation, allosterically activated by GTP, when glutamine is the substrate; GTP has no effect on the reaction when ammonia is the substrate. The allosteric effector GTP functions by stabilizing the protein conformation that binds the tetrahedral intermediate(s) formed during glutamine hydrolysis. Inhibited by the product CTP, via allosteric rather than competitive inhibition. Its function is as follows. Catalyzes the ATP-dependent amination of UTP to CTP with either L-glutamine or ammonia as the source of nitrogen. Regulates intracellular CTP levels through interactions with the four ribonucleotide triphosphates. The polypeptide is CTP synthase (Oleidesulfovibrio alaskensis (strain ATCC BAA-1058 / DSM 17464 / G20) (Desulfovibrio alaskensis)).